The following is a 377-amino-acid chain: Methylthioribose-1-phosphate isomerase (377 aa).

Residue aspartate 254 is the Proton donor of the active site.

Belongs to the eIF-2B alpha/beta/delta subunits family. MtnA subfamily.

It is found in the cytoplasm. It localises to the nucleus. The catalysed reaction is 5-(methylsulfanyl)-alpha-D-ribose 1-phosphate = 5-(methylsulfanyl)-D-ribulose 1-phosphate. The protein operates within amino-acid biosynthesis; L-methionine biosynthesis via salvage pathway; L-methionine from S-methyl-5-thio-alpha-D-ribose 1-phosphate: step 1/6. In terms of biological role, catalyzes the interconversion of methylthioribose-1-phosphate (MTR-1-P) into methylthioribulose-1-phosphate (MTRu-1-P). This chain is Methylthioribose-1-phosphate isomerase (mri1), found in Aspergillus terreus (strain NIH 2624 / FGSC A1156).